We begin with the raw amino-acid sequence, 583 residues long: Alpha-1,3-arabinosyltransferase XAT2 (583 aa).

The Cytoplasmic portion of the chain corresponds to 1–21 (MKPVERAKLVRSLRQESRRLR). A helical; Signal-anchor for type II membrane protein transmembrane segment spans residues 22–42 (LLVLVIGFFLVTLTFVVISKP). Residues 43-583 (DALLFNLNGR…LLEVLDQLNQ (541 aa)) are Lumenal-facing. A disordered region spans residues 73-178 (RRSADTFPAA…NGKQEDGKPN (106 aa)). Basic and acidic residues-rich tracts occupy residues 102 to 121 (TSEE…KNEE) and 135 to 146 (EDNKNGEEEGHT). A compositionally biased stretch (polar residues) spans 149–160 (SKVTLPTVSNYT). Residue asparagine 158 is glycosylated (N-linked (GlcNAc...) asparagine). Residues 162 to 178 (RDAEDTDNGKQEDGKPN) are compositionally biased toward basic and acidic residues. Residues asparagine 229, asparagine 382, asparagine 450, and asparagine 485 are each glycosylated (N-linked (GlcNAc...) asparagine).

Belongs to the glycosyltransferase 61 family.

The protein resides in the golgi apparatus membrane. Its pathway is glycan metabolism. Functionally, glycosyltransferase involved in the arabinosylation of xylan, the major hemicellulose (non-cellulosic component) of primary and secondary walls of angiosperms. Possesses alpha-1,3-arabinosyltransferase activity, transferring an arabinofuranose residue to the xylan backbone. The chain is Alpha-1,3-arabinosyltransferase XAT2 from Oryza sativa subsp. japonica (Rice).